Here is a 331-residue protein sequence, read N- to C-terminus: 6-phosphogluconolactonase (331 aa).

Residue Lys-287 is modified to N6-acetyllysine.

Belongs to the cycloisomerase 2 family.

It carries out the reaction 6-phospho-D-glucono-1,5-lactone + H2O = 6-phospho-D-gluconate + H(+). Its pathway is carbohydrate degradation; pentose phosphate pathway; D-ribulose 5-phosphate from D-glucose 6-phosphate (oxidative stage): step 2/3. In terms of biological role, catalyzes the hydrolysis of 6-phosphogluconolactone to 6-phosphogluconate. This is 6-phosphogluconolactonase from Escherichia coli (strain SMS-3-5 / SECEC).